The following is a 320-amino-acid chain: MHVASALMVEQKGSEAAASSPDVLRAWATQYHMPSESSDAARPALKHAYKPPASDAKGITMALTIIGTWTAVFLHAIFQIRLPTSMDQLHWLPVSEATAQLLGGSSSLLHIAAVFIVLEFLYTGLFITTHDAMHGTIALRHRQLNDLLGNICISLYAWFDYSMLHRKHWEHHNHTGEVGKDPDFHKGNPGLVPWFASFMSSYMSLWQFARLAWWAVVMQMLGAPMANLLVFMAAAPILSAFRLFYFGTYLPHKPEPGPAAGSQVMAWFRAKTSEASDVMSFLTCYHFDLHWEHHRWPFAPWWQLPHCRRLSGRGLVPALA.

The enzyme catalyses all-trans-beta-carotene + 2 AH2 + 2 O2 = echinenone + 2 A + 3 H2O. It catalyses the reaction echinenone + 2 AH2 + 2 O2 = canthaxanthin + 2 A + 3 H2O. It functions in the pathway carotenoid biosynthesis; astaxanthin biosynthesis. Functionally, converts beta-carotene to canthaxanthin via echinenone. This Haematococcus lacustris (Green alga) protein is Beta-carotene ketolase.